A 440-amino-acid chain; its full sequence is Coenzyme A disulfide reductase (440 aa).

FAD is bound at residue 8–33 (GAVAGGATCASQIRRLDKDSEITIFE). Residues Thr15, Gln19, Arg22, Ser39, and Asn42 each coordinate substrate. Cys43 functions as the Nucleophile in the catalytic mechanism. The Redox-active role is filled by Cys43. Lys71 contacts substrate. 151–166 (ALVVGAGYISLEVLEN) is an NADP(+) binding site. Position 267-277 (267-277 (TNIPNIYALGD)) interacts with FAD. Residue His299 coordinates substrate. Tyr419 provides a ligand contact to FAD. Lys427 provides a ligand contact to substrate.

This sequence belongs to the class-III pyridine nucleotide-disulfide oxidoreductase family. As to quaternary structure, homodimer. The cofactor is FAD.

It carries out the reaction NADP(+) + 2 CoA = CoA-disulfide + NADPH + H(+). Functionally, catalyzes specifically the NADPH-dependent reduction of coenzyme A disulfide. This chain is Coenzyme A disulfide reductase, found in Staphylococcus haemolyticus (strain JCSC1435).